The chain runs to 297 residues: tRNA-cytidine(32) 2-sulfurtransferase (297 aa).

Residues 45–50 carry the PP-loop motif motif; that stretch reads SGGKDS. Residues C120, C123, and C211 each contribute to the [4Fe-4S] cluster site.

Belongs to the TtcA family. In terms of assembly, homodimer. Mg(2+) serves as cofactor. It depends on [4Fe-4S] cluster as a cofactor.

It is found in the cytoplasm. The enzyme catalyses cytidine(32) in tRNA + S-sulfanyl-L-cysteinyl-[cysteine desulfurase] + AH2 + ATP = 2-thiocytidine(32) in tRNA + L-cysteinyl-[cysteine desulfurase] + A + AMP + diphosphate + H(+). It participates in tRNA modification. Its function is as follows. Catalyzes the ATP-dependent 2-thiolation of cytidine in position 32 of tRNA, to form 2-thiocytidine (s(2)C32). The sulfur atoms are provided by the cysteine/cysteine desulfurase (IscS) system. The polypeptide is tRNA-cytidine(32) 2-sulfurtransferase (Vibrio parahaemolyticus serotype O3:K6 (strain RIMD 2210633)).